The sequence spans 81 residues: NADH-ubiquinone oxidoreductase chain 6 (81 aa).

3 helical membrane passes run 1–21 (MTYF…GVAS), 27–47 (YGVV…LSLG), and 48–68 (VSFV…VVFV).

This sequence belongs to the complex I subunit 6 family.

The protein localises to the mitochondrion membrane. The enzyme catalyses a ubiquinone + NADH + 5 H(+)(in) = a ubiquinol + NAD(+) + 4 H(+)(out). Functionally, core subunit of the mitochondrial membrane respiratory chain NADH dehydrogenase (Complex I) that is believed to belong to the minimal assembly required for catalysis. Complex I functions in the transfer of electrons from NADH to the respiratory chain. The immediate electron acceptor for the enzyme is believed to be ubiquinone. In Anas platyrhynchos (Mallard), this protein is NADH-ubiquinone oxidoreductase chain 6 (MT-ND6).